The chain runs to 504 residues: Maturase K (504 aa).

It belongs to the intron maturase 2 family. MatK subfamily.

It localises to the plastid. The protein localises to the chloroplast. In terms of biological role, usually encoded in the trnK tRNA gene intron. Probably assists in splicing its own and other chloroplast group II introns. The polypeptide is Maturase K (Draba nemorosa (Woodland whitlowgrass)).